A 152-amino-acid polypeptide reads, in one-letter code: Transcriptional regulator MraZ (152 aa).

2 SpoVT-AbrB domains span residues 5 to 52 (ATLV…PLPE) and 81 to 124 (ASEC…DETT).

The protein belongs to the MraZ family. In terms of assembly, forms oligomers.

It localises to the cytoplasm. The protein resides in the nucleoid. Functionally, negatively regulates its own expression and that of the subsequent genes in the proximal part of the division and cell wall (dcw) gene cluster. Acts by binding directly to DNA. May also regulate the expression of genes outside the dcw cluster. The sequence is that of Transcriptional regulator MraZ from Klebsiella pneumoniae subsp. pneumoniae (strain ATCC 700721 / MGH 78578).